A 537-amino-acid polypeptide reads, in one-letter code: Hydroxylamine reductase (537 aa).

Residues cysteine 3, cysteine 6, cysteine 15, and cysteine 21 each contribute to the [4Fe-4S] cluster site. Hybrid [4Fe-2O-2S] cluster is bound by residues histidine 239, glutamate 263, cysteine 307, cysteine 393, cysteine 421, cysteine 446, glutamate 480, and lysine 482. Position 393 is a cysteine persulfide (cysteine 393).

This sequence belongs to the HCP family. The cofactor is [4Fe-4S] cluster. Hybrid [4Fe-2O-2S] cluster is required as a cofactor.

The protein localises to the cytoplasm. The catalysed reaction is A + NH4(+) + H2O = hydroxylamine + AH2 + H(+). Functionally, catalyzes the reduction of hydroxylamine to form NH(3) and H(2)O. This is Hydroxylamine reductase from Lawsonia intracellularis (strain PHE/MN1-00).